A 278-amino-acid chain; its full sequence is Biotin synthase (278 aa).

One can recognise a Radical SAM core domain in the interval 1–227 (MQIMLCAISN…QSVVMVAGGR (227 aa)). Residues Cys-16, Cys-20, and Cys-23 each contribute to the [4Fe-4S] cluster site. Residues Cys-60, Cys-95, and Cys-153 each contribute to the [2Fe-2S] cluster site.

This sequence belongs to the radical SAM superfamily. Biotin synthase family. In terms of assembly, homodimer. It depends on [4Fe-4S] cluster as a cofactor. The cofactor is [2Fe-2S] cluster.

The catalysed reaction is (4R,5S)-dethiobiotin + (sulfur carrier)-SH + 2 reduced [2Fe-2S]-[ferredoxin] + 2 S-adenosyl-L-methionine = (sulfur carrier)-H + biotin + 2 5'-deoxyadenosine + 2 L-methionine + 2 oxidized [2Fe-2S]-[ferredoxin]. It participates in cofactor biosynthesis; biotin biosynthesis; biotin from 7,8-diaminononanoate: step 2/2. In terms of biological role, catalyzes the conversion of dethiobiotin (DTB) to biotin by the insertion of a sulfur atom into dethiobiotin via a radical-based mechanism. The chain is Biotin synthase from Campylobacter jejuni subsp. doylei (strain ATCC BAA-1458 / RM4099 / 269.97).